A 66-amino-acid polypeptide reads, in one-letter code: Large ribosomal subunit protein bL33c (66 aa).

It belongs to the bacterial ribosomal protein bL33 family.

The protein resides in the plastid. It localises to the chloroplast. The chain is Large ribosomal subunit protein bL33c from Morus indica (Mulberry).